A 215-amino-acid chain; its full sequence is Porin MspB (215 aa).

The signal sequence occupies residues 1–31 (MTAFKRVLIAMISALLAGTTGMFVSAGAAHA).

This sequence belongs to the mycobacterial porin (TC 1.B.24) family. In terms of assembly, octamers. Probably forms a goblet with the wide end on the exterior of the outer membrane and a central channel. It is not known if mixed oligomers of MspB with other Msp subunits form in vivo.

The protein resides in the cell outer membrane. Its subcellular location is the secreted. The protein localises to the cell wall. A backup porin induced when MspA, the major porin, is deleted. Probably forms a water-filled channel which favors the permeation of cations. There are about 2400 porins in wild-type, 800 in an mspA deletion and 150 in a double mspA-mspC deletion. A triple mspA-mspC-mspD deletion mutant has low but detectable channel activity. Different conductance values with maxima at 2.3 and 4.6 nanosiemens might be caused by a simultaneous reconstitution of MspB channels into the membrane or by the existence of different MspB conformations. The chain is Porin MspB (mspB) from Mycolicibacterium smegmatis (strain ATCC 700084 / mc(2)155) (Mycobacterium smegmatis).